The primary structure comprises 318 residues: MNPIAVTLLTGFLGAGKTTLLRHILNEQHGYKIAVIENEFGEVSVDDQLIGDRATQIKTLTNGCICCSRSNELEDALLDLLDNLDKGNIQFDRLVIECTGMADPGPIIQTFFSHEVLCQRYLLDGVIALVDAVHADEQMNQFTIAQSQVGYADRILLTKTDVAGEAEKLHERLARINARAPVYTVTHGDIDLGLLFNTNGFMLEENVVSTKPRFHFIADKQNDISSIVVELDYPVDISEVSRVMENLLLESADKLLRYKGMLWIDGEPNRLLFQGVQRLYSADWDRPWGDEKPHSTMVFIGIQLPEEEIRAAFAGLRK.

11-19 (GFLGAGKTT) provides a ligand contact to GTP. The Zn(2+) site is built by Glu37, Glu42, Cys66, Glu74, and His114. The short motif at 64-67 (CICC) is the CXCC motif element. A GTP-binding site is contributed by Asp161. Positions 167, 170, and 187 each coordinate Zn(2+). A CobW C-terminal domain is found at 224-315 (ISSIVVELDY…EEEIRAAFAG (92 aa)).

Belongs to the SIMIBI class G3E GTPase family. ZNG1 subfamily. In terms of assembly, monomer in the apo form. Metal binding induces oligomerization. Forms homodimers and higher oligomers.

The enzyme catalyses GTP + H2O = GDP + phosphate + H(+). Its activity is regulated as follows. GTPase activity is inhibited by metal binding. Activity is decreased in the presence of Co(II) or Ni(II), and is completely inhibited in the presence of Zn(II). In terms of biological role, zinc chaperone that directly transfers zinc cofactor to target proteins, thereby activating them. Zinc is transferred from the CXCC motif in the GTPase domain to the zinc binding site in target proteins in a process requiring GTP hydrolysis. The protein is Zinc chaperone YjiA (yjiA) of Escherichia coli (strain K12).